We begin with the raw amino-acid sequence, 544 residues long: CTP synthase (544 aa).

The segment at 1 to 266 is amidoligase domain; the sequence is MIRYIFITGG…DSEVLSHFGI (266 aa). Residue S13 participates in CTP binding. S13 is a binding site for UTP. ATP-binding positions include 14 to 19 and D71; that span reads SLGKGI. D71 and E140 together coordinate Mg(2+). CTP-binding positions include 147 to 149, 187 to 192, and K223; these read DIE and KTKPTQ. UTP is bound by residues 187-192 and K223; that span reads KTKPTQ. 239 to 241 provides a ligand contact to ATP; the sequence is RDV. Residues 292–543 enclose the Glutamine amidotransferase type-1 domain; the sequence is TIGLVGKYTD…IAAAVKQSRL (252 aa). Residue G355 participates in L-glutamine binding. The active-site Nucleophile; for glutamine hydrolysis is C382. Residues 383-386, E406, and R471 contribute to the L-glutamine site; that span reads YGMQ. Residues H516 and E518 contribute to the active site.

This sequence belongs to the CTP synthase family. Homotetramer.

It carries out the reaction UTP + L-glutamine + ATP + H2O = CTP + L-glutamate + ADP + phosphate + 2 H(+). The enzyme catalyses L-glutamine + H2O = L-glutamate + NH4(+). The catalysed reaction is UTP + NH4(+) + ATP = CTP + ADP + phosphate + 2 H(+). The protein operates within pyrimidine metabolism; CTP biosynthesis via de novo pathway; CTP from UDP: step 2/2. Its activity is regulated as follows. Allosterically activated by GTP, when glutamine is the substrate; GTP has no effect on the reaction when ammonia is the substrate. The allosteric effector GTP functions by stabilizing the protein conformation that binds the tetrahedral intermediate(s) formed during glutamine hydrolysis. Inhibited by the product CTP, via allosteric rather than competitive inhibition. In terms of biological role, catalyzes the ATP-dependent amination of UTP to CTP with either L-glutamine or ammonia as the source of nitrogen. Regulates intracellular CTP levels through interactions with the four ribonucleotide triphosphates. The polypeptide is CTP synthase (Hyphomonas neptunium (strain ATCC 15444)).